A 113-amino-acid chain; its full sequence is Prostate and testis expressed protein 2 (113 aa).

The signal sequence occupies residues 1–26 (MLVLFLLGTVFLLCPYWGELHDPIKA). One can recognise a UPAR/Ly6 domain in the interval 29–110 (IMCYECKKYH…CDHSNYCNLP (82 aa)). Cystine bridges form between cysteine 31-cysteine 57, cysteine 34-cysteine 42, cysteine 49-cysteine 80, and cysteine 84-cysteine 101.

It belongs to the PATE family. In terms of tissue distribution, isoform 1 and isoform 2 are expressed in prostate and testis. Isoform 2 is expressed in male and female brain at equivalent levels, in particular in cerebellum, cerebral cortex, corpus callosum, occipital, parrietal and temporal lobes, and pons, but not in amygdala, cerebral peduncle, hippocampus and thalamus.

It localises to the secreted. This chain is Prostate and testis expressed protein 2 (PATE2), found in Homo sapiens (Human).